A 341-amino-acid chain; its full sequence is Geranylgeranyl transferase type-2 subunit beta (341 aa).

6 PFTB repeats span residues 15–55 (KSKH…ITMN), 62–104 (QQDV…KIYD), 122–163 (RERL…SLLN), 170–211 (ADTA…AIMN), 223–264 (VKLI…SILK), and 271–313 (LKIL…SLID). Residues 196–198 (HAA) and 243–255 (RPEKLPDVCYSWW) each bind geranylgeranyl diphosphate. Zn(2+) is bound by residues Asp249, Cys251, and His301.

This sequence belongs to the protein prenyltransferase subunit beta family. As to quaternary structure, heterodimer of an alpha and a beta subunit. It depends on Zn(2+) as a cofactor.

It carries out the reaction geranylgeranyl diphosphate + L-cysteinyl-[protein] = S-geranylgeranyl-L-cysteinyl-[protein] + diphosphate. Catalyzes the transfer of a geranyl-geranyl moiety from geranyl-geranyl pyrophosphate to proteins having the C-terminal -XCC or -XCXC, where both cysteines may become modified. Acts on YPT1 and SEC4. In Candida albicans (Yeast), this protein is Geranylgeranyl transferase type-2 subunit beta (BET2).